We begin with the raw amino-acid sequence, 206 residues long: MGSRLPRDGGKQGHGAFLDGQLLVAMPGMSDNRFSRSVIYLCAHSEEGAMGIILNRPARKVTFSELLVQLDVIKADEMIRLPAQAELVQVLKGGPVETGRGFVLHSNDFFIDDSTLPIDAGVSLTATIDILRAIAKGDGPDRAILALGYAGWSAGQLEAEMQDNGWLNIPADPSLIFDEALGSKYERALQKIGIDPGRLSSDLGHA.

Belongs to the UPF0301 (AlgH) family.

This chain is UPF0301 protein Msil_1255, found in Methylocella silvestris (strain DSM 15510 / CIP 108128 / LMG 27833 / NCIMB 13906 / BL2).